A 74-amino-acid chain; its full sequence is ATP synthase subunit 9, mitochondrial (74 aa).

The next 2 membrane-spanning stretches (helical) occupy residues 8 to 28 (IGAG…GNVF) and 50 to 70 (ILGF…AFLI).

This sequence belongs to the ATPase C chain family. In terms of assembly, F-type ATPases have 2 components, CF(1) - the catalytic core - and CF(0) - the membrane proton channel. CF(1) has five subunits: alpha(3), beta(3), gamma(1), delta(1), epsilon(1). CF(0) has three main subunits: a, b and c.

It is found in the mitochondrion membrane. Functionally, this protein is one of the chains of the nonenzymatic membrane component (F0) of mitochondrial ATPase. The chain is ATP synthase subunit 9, mitochondrial (ATP9) from Triticum aestivum (Wheat).